Here is a 315-residue protein sequence, read N- to C-terminus: MLEIEKPKIECVESTEDGSYGRFVVEPLERGYGITLGNSLRRILLSSLPGVAANSVRIEGVLHEFSTVKGVKEDVTELILNIKALCLKMEGEDSKVIYIDAHGPGEVTGADIRTDGSVEVINKDLHIATLDEDGKLYMEIEVNRGRGYVTQNKNKRDDMPIGTIAVDSIYSPIKRVNFTVENTRVAQITDYDKLTIEVWGNGTIRPEEAISLAAKILIEHFKLFMTLTDHADDVEIMVEKEEDKKEKVLEMTIEELDLSVRSYNCLKRAGINTVQELTQRSMEDMMKVRNLGRKSLEEVEQKLKALGLSLKLNDE.

Residues 1 to 228 form an alpha N-terminal domain (alpha-NTD) region; it reads MLEIEKPKIE…EHFKLFMTLT (228 aa). Positions 245 to 315 are alpha C-terminal domain (alpha-CTD); it reads KEKVLEMTIE…LGLSLKLNDE (71 aa).

It belongs to the RNA polymerase alpha chain family. In terms of assembly, homodimer. The RNAP catalytic core consists of 2 alpha, 1 beta, 1 beta' and 1 omega subunit. When a sigma factor is associated with the core the holoenzyme is formed, which can initiate transcription.

It carries out the reaction RNA(n) + a ribonucleoside 5'-triphosphate = RNA(n+1) + diphosphate. DNA-dependent RNA polymerase catalyzes the transcription of DNA into RNA using the four ribonucleoside triphosphates as substrates. This Clostridium acetobutylicum (strain ATCC 824 / DSM 792 / JCM 1419 / IAM 19013 / LMG 5710 / NBRC 13948 / NRRL B-527 / VKM B-1787 / 2291 / W) protein is DNA-directed RNA polymerase subunit alpha.